Reading from the N-terminus, the 662-residue chain is DNA ligase (662 aa).

NAD(+) is bound by residues 31–35 (DSEYD), 79–80 (SL), and glutamate 119. Lysine 121 serves as the catalytic N6-AMP-lysine intermediate. Positions 142, 176, 288, and 312 each coordinate NAD(+). Zn(2+) is bound by residues cysteine 405, cysteine 408, cysteine 421, and cysteine 427. The BRCT domain maps to 583–662 (NIEKKLDNLT…DELNSFLDNL (80 aa)).

This sequence belongs to the NAD-dependent DNA ligase family. LigA subfamily. Requires Mg(2+) as cofactor. Mn(2+) serves as cofactor.

The enzyme catalyses NAD(+) + (deoxyribonucleotide)n-3'-hydroxyl + 5'-phospho-(deoxyribonucleotide)m = (deoxyribonucleotide)n+m + AMP + beta-nicotinamide D-nucleotide.. DNA ligase that catalyzes the formation of phosphodiester linkages between 5'-phosphoryl and 3'-hydroxyl groups in double-stranded DNA using NAD as a coenzyme and as the energy source for the reaction. It is essential for DNA replication and repair of damaged DNA. This chain is DNA ligase, found in Finegoldia magna (strain ATCC 29328 / DSM 20472 / WAL 2508) (Peptostreptococcus magnus).